The chain runs to 274 residues: Large ribosomal subunit protein uL2 (274 aa).

The segment at 223 to 256 (VVMNPVDHPHGGGEGKTGEGRHPVDPWGNLTKGY) is disordered. Over residues 229–246 (DHPHGGGEGKTGEGRHPV) the composition is skewed to basic and acidic residues.

The protein belongs to the universal ribosomal protein uL2 family. Part of the 50S ribosomal subunit. Forms a bridge to the 30S subunit in the 70S ribosome.

Its function is as follows. One of the primary rRNA binding proteins. Required for association of the 30S and 50S subunits to form the 70S ribosome, for tRNA binding and peptide bond formation. It has been suggested to have peptidyltransferase activity; this is somewhat controversial. Makes several contacts with the 16S rRNA in the 70S ribosome. The polypeptide is Large ribosomal subunit protein uL2 (Albidiferax ferrireducens (strain ATCC BAA-621 / DSM 15236 / T118) (Rhodoferax ferrireducens)).